The chain runs to 207 residues: Large ribosomal subunit protein uL4 (207 aa).

The interval 49 to 77 is disordered; it reads HAVKNRSAVRGGGKKPWRQKGTGRARQGS. Positions 60–71 are enriched in basic residues; the sequence is GGKKPWRQKGTG.

The protein belongs to the universal ribosomal protein uL4 family. As to quaternary structure, part of the 50S ribosomal subunit.

In terms of biological role, one of the primary rRNA binding proteins, this protein initially binds near the 5'-end of the 23S rRNA. It is important during the early stages of 50S assembly. It makes multiple contacts with different domains of the 23S rRNA in the assembled 50S subunit and ribosome. Its function is as follows. Forms part of the polypeptide exit tunnel. The polypeptide is Large ribosomal subunit protein uL4 (Levilactobacillus brevis (strain ATCC 367 / BCRC 12310 / CIP 105137 / JCM 1170 / LMG 11437 / NCIMB 947 / NCTC 947) (Lactobacillus brevis)).